A 94-amino-acid polypeptide reads, in one-letter code: uncharacterized protein (94 aa).

In terms of tissue distribution, specifically expressed in retina and retinal pigment epithelium.

This is an uncharacterized protein from Homo sapiens (Human).